A 63-amino-acid polypeptide reads, in one-letter code: Large ribosomal subunit protein uL29 (63 aa).

Belongs to the universal ribosomal protein uL29 family.

The protein is Large ribosomal subunit protein uL29 of Escherichia coli O8 (strain IAI1).